We begin with the raw amino-acid sequence, 252 residues long: NLP effector protein Pc118356 (252 aa).

A signal peptide spans 1 to 17 (MALTVLAATALTALIMG). N-linked (GlcNAc...) asparagine glycosylation is found at N20 and N67. A Hepta-peptide GHRHDWE motif motif is present at residues 121-127 (QDRHFWE). N-linked (GlcNAc...) asparagine glycosylation is present at N166.

This sequence belongs to the Necrosis inducing protein (NPP1) family.

The protein resides in the secreted. Its function is as follows. Secreted effector that contributes strongly to virulence during infection by P.capsici. The chain is NLP effector protein Pc118356 from Phytophthora capsici.